Here is a 142-residue protein sequence, read N- to C-terminus: Small ribosomal subunit protein uS12 (142 aa).

The protein belongs to the universal ribosomal protein uS12 family. As to quaternary structure, part of the 30S ribosomal subunit.

Functionally, with S4 and S5 plays an important role in translational accuracy. Located at the interface of the 30S and 50S subunits. This chain is Small ribosomal subunit protein uS12, found in Methanoculleus marisnigri (strain ATCC 35101 / DSM 1498 / JR1).